The primary structure comprises 950 residues: MKLSELFNPNEFAARHLSFGDEAALLAAVGEKSMDEFVGNTVPQSIRMPSELDLPDALTEADALAKLKGIASKNVINKSYIGLGYYPTRVPNVILRNVLENPGWYTAYTPYQAEIAQGRLEALLNFQQVCIDLTGFPVAGASLLDEATAAAEAMAMAHRVGKVKSERFFVDARVYPQTLDVMKTRAKYFGFELVVSDFAKADDGEYFGALFQYVGKDGDVQDLQDVIGRLKAKGTIVAVAADIMSLVLLKSPAELGADIALGNTQRFGVPMGFGGPHAAYFAFKDAFKRSAPGRIIGVSKDASGKPALRMALSTREQHIRREKATSNICTAQALLANLAGMYAVYHGPEGVKRIANRIHALASAFADALVSDGINVVHKVFFDTVTVDFGNKEKADQVFAAALESGYNLRRVNDTQVAAAFHETSACEDLVDLYRAFTGKDTFAFADDVKGRLNAELLRQDDILQHPVFNRYHTEHEMLRYLKKLEDRDLAMNRSMISLGSCTMKLNATAEMLPITWAEFSDIHPYAPEAQTAGYRELLADMENSLKSITGFDAISFQPNSGAQGEYSGMLAIRRYQEAQGEAQRNICLIPKSAHGTNPATAAMLGLKVVVVDTDEHGNVNIDDLKAKAEQHRDALSAIMITYPSTHGVYEEGIRDICRIVHENGGQVYMDGANLNAQIGIMQPAEVGADVLHMNLHKTFCIPHGGGGPGMGPIGLKAHLAPFAPGHALTDTHSASADQTAVAAAAFGSASILPITWMYLTMMGKQGMEQATRWALLNANYVAKRLSEDYPILYTGKNGRVAHECIVDLRPLKAESGITETDIAKRLMDYGFHAPTVSFPVAGTLMIEPTESESKAELDRFIAALKQIKQEVLKVGRGEWPKEDNPLVNAPHTASDVTGEWAHPYSREEAVFPLPFVREHKFWPSVNRVDDVYGDRNLVCSCPPMENYED.

Position 698 is an N6-(pyridoxal phosphate)lysine (Lys698).

It belongs to the GcvP family. The glycine cleavage system is composed of four proteins: P, T, L and H. The cofactor is pyridoxal 5'-phosphate.

It catalyses the reaction N(6)-[(R)-lipoyl]-L-lysyl-[glycine-cleavage complex H protein] + glycine + H(+) = N(6)-[(R)-S(8)-aminomethyldihydrolipoyl]-L-lysyl-[glycine-cleavage complex H protein] + CO2. Functionally, the glycine cleavage system catalyzes the degradation of glycine. The P protein binds the alpha-amino group of glycine through its pyridoxal phosphate cofactor; CO(2) is released and the remaining methylamine moiety is then transferred to the lipoamide cofactor of the H protein. The chain is Glycine dehydrogenase (decarboxylating) from Neisseria meningitidis serogroup C / serotype 2a (strain ATCC 700532 / DSM 15464 / FAM18).